Here is a 263-residue protein sequence, read N- to C-terminus: Hydroxyacylglutathione hydrolase (263 aa).

The Zn(2+) site is built by His-55, His-57, Asp-59, His-60, His-117, Asp-134, and His-172.

Belongs to the metallo-beta-lactamase superfamily. Glyoxalase II family. As to quaternary structure, monomer. It depends on Zn(2+) as a cofactor.

The catalysed reaction is an S-(2-hydroxyacyl)glutathione + H2O = a 2-hydroxy carboxylate + glutathione + H(+). It participates in secondary metabolite metabolism; methylglyoxal degradation; (R)-lactate from methylglyoxal: step 2/2. Its function is as follows. Thiolesterase that catalyzes the hydrolysis of S-D-lactoyl-glutathione to form glutathione and D-lactic acid. In Shewanella baltica (strain OS185), this protein is Hydroxyacylglutathione hydrolase.